A 48-amino-acid polypeptide reads, in one-letter code: Small polypeptide DEVIL 19 (48 aa).

The tract at residues alanine 13 to isoleucine 44 is required for DVL/RTFL small polypeptide activity. A helical membrane pass occupies residues glutamine 25 to tryptophan 42.

The protein belongs to the DVL/RTFL small polypeptides family.

Its subcellular location is the cell membrane. Its function is as follows. Small polypeptide acting as a regulatory molecule which coordinates cellular responses required for differentiation, growth and development, probably by restricting polar cell proliferation in lateral organs and coordinating socket cell recruitment and differentiation at trichome sites. This is Small polypeptide DEVIL 19 from Arabidopsis thaliana (Mouse-ear cress).